The primary structure comprises 299 residues: Nucleophosmin (299 aa).

A compositionally biased stretch (acidic residues) spans 125 to 134 (ESSDDEDEEH). The segment at 125–247 (ESSDDEDEEH…TPKTPLSSEE (123 aa)) is disordered. Residues 153–158 (PRKKTR) carry the Nuclear localization signal motif. A compositionally biased stretch (acidic residues) spans 160–187 (EEEEEDSDEDDDDDEDDDDEDDDEEEEE). Residues 188 to 197 (TPVKKTDSTK) are compositionally biased toward basic and acidic residues. The short motif at 189 to 195 (PVKKTDS) is the Nuclear localization signal element. Repeats lie at residues 218-220 (KTP), 221-223 (KTP), 237-239 (KTP), and 240-242 (KTP). The 4 X 3 AA repeats of K-T-P stretch occupies residues 218–242 (KTPKTPEQKGKQDTKPQTPKTPKTP). A compositionally biased stretch (basic and acidic residues) spans 221-231 (KTPEQKGKQDT). The span at 232 to 242 (KPQTPKTPKTP) shows a compositional bias: low complexity.

Belongs to the nucleoplasmin family. Decamer formed by two pentameric rings associated in a head-to-head fashion. In terms of processing, phosphorylated.

The protein localises to the cytoplasm. The protein resides in the nucleus. Its subcellular location is the nucleoplasm. It is found in the nucleolus. Functionally, acts as a chaperonin for the core histones H3, H2B and H4. Associated with nucleolar ribonucleoprotein structures and bind single-stranded nucleic acids. It may function in the assembly and/or transport of ribosome. May stimulate endonuclease activity on apurinic/apyrimidinic (AP) double-stranded DNA. May inhibit endonuclease activity on AP single-stranded RNA. In Xenopus laevis (African clawed frog), this protein is Nucleophosmin (npm1).